We begin with the raw amino-acid sequence, 322 residues long: Biotin synthase (322 aa).

In terms of domain architecture, Radical SAM core spans 39–266; the sequence is NQVQISSLLN…KSVVRLSAGR (228 aa). [4Fe-4S] cluster contacts are provided by cysteine 54, cysteine 58, and cysteine 61. 4 residues coordinate [2Fe-2S] cluster: cysteine 98, cysteine 129, cysteine 189, and arginine 261.

Belongs to the radical SAM superfamily. Biotin synthase family. Homodimer. It depends on [4Fe-4S] cluster as a cofactor. The cofactor is [2Fe-2S] cluster.

It carries out the reaction (4R,5S)-dethiobiotin + (sulfur carrier)-SH + 2 reduced [2Fe-2S]-[ferredoxin] + 2 S-adenosyl-L-methionine = (sulfur carrier)-H + biotin + 2 5'-deoxyadenosine + 2 L-methionine + 2 oxidized [2Fe-2S]-[ferredoxin]. The protein operates within cofactor biosynthesis; biotin biosynthesis; biotin from 7,8-diaminononanoate: step 2/2. Catalyzes the conversion of dethiobiotin (DTB) to biotin by the insertion of a sulfur atom into dethiobiotin via a radical-based mechanism. The chain is Biotin synthase from Vesicomyosocius okutanii subsp. Calyptogena okutanii (strain HA).